Here is a 1009-residue protein sequence, read N- to C-terminus: C2 domain-containing protein aex-1 (1009 aa).

A C2 domain is found at 812–945 (NAPHVDVHIS…ASEEKPTQRL (134 aa)).

This sequence belongs to the unc-13 family. In terms of tissue distribution, expressed in intestine, body wall muscles and some amphid neurons.

In terms of biological role, involved in retrograde signaling from post-synaptic cells to pre-synaptic neurons, probably by regulating vesicle exocytosis in post-synaptic cells. Acts in muscles, to regulate the localization of synaptic vesicle fusion protein unc-13 likely during vesicle exocytosis and thus regulate retrograde signaling at the neuromuscular junction (NMJ). Regulates anterior body muscle contractions (aBOC) and the expulsion steps during the defecation motor program (DMP). Probably by regulating DMP, plays a homeostatic role in the uptake of triglycerides. Regulates locomotion. This chain is C2 domain-containing protein aex-1, found in Caenorhabditis elegans.